Consider the following 554-residue polypeptide: uncharacterized protein (554 aa).

The tract at residues 1 to 25 (MSSSIPPRLYDMSPTESKKQEDVSE) is disordered. Residue S13 is modified to Phosphoserine. A run of 6 helical transmembrane segments spans residues 82 to 102 (FFVA…TSLI), 120 to 140 (APYL…VWSL), 149 to 169 (WAFN…GASP), 171 to 191 (FASI…NLPV), 210 to 230 (VMSF…WGLI), and 253 to 273 (FLFT…LVSV). S334 is subject to Phosphoserine. 6 consecutive transmembrane segments (helical) span residues 364 to 384 (LAIS…AFPL), 412 to 432 (SLIV…LVEF), 437 to 457 (KGTL…STTA), 462 to 482 (AYLG…GVLY), 497 to 517 (AVGL…VIAM), and 525 to 545 (APIF…VFFP).

Belongs to the major facilitator superfamily.

It is found in the endoplasmic reticulum. Its subcellular location is the membrane. This is an uncharacterized protein from Schizosaccharomyces pombe (strain 972 / ATCC 24843) (Fission yeast).